The chain runs to 505 residues: Maturase K (505 aa).

It belongs to the intron maturase 2 family. MatK subfamily.

Its subcellular location is the plastid. It localises to the chloroplast. Usually encoded in the trnK tRNA gene intron. Probably assists in splicing its own and other chloroplast group II introns. The polypeptide is Maturase K (Phaulothamnus spinescens (Snake-eyes)).